The chain runs to 118 residues: Large ribosomal subunit protein uL18 (118 aa).

It belongs to the universal ribosomal protein uL18 family. Part of the 50S ribosomal subunit; part of the 5S rRNA/L5/L18/L25 subcomplex. Contacts the 5S and 23S rRNAs.

This is one of the proteins that bind and probably mediate the attachment of the 5S RNA into the large ribosomal subunit, where it forms part of the central protuberance. The polypeptide is Large ribosomal subunit protein uL18 (Campylobacter jejuni subsp. jejuni serotype O:6 (strain 81116 / NCTC 11828)).